We begin with the raw amino-acid sequence, 148 residues long: MSTEGDHVPQAEEVIETVEVVEEETGSSPLSVEDSLKEVLKRALVHDGLARGIREASKALDRRQAHLCVLCESCDQEAYVKLVEALCAESQTPLVKVADPKILGEWAGLCVLDRDGNARKVVGCSCVAVTDYGEDSVALQTLLSSFAA.

Belongs to the eukaryotic ribosomal protein eS12 family. Component of the small ribosomal subunit (SSU). Mature yeast ribosomes consist of a small (40S) and a large (60S) subunit. The 40S small subunit contains 1 molecule of ribosomal RNA (18S rRNA) and at least 33 different proteins. The large 60S subunit contains 3 rRNA molecules (25S, 5.8S and 5S rRNA) and at least 46 different proteins.

Its subcellular location is the cytoplasm. Functionally, component of the ribosome, a large ribonucleoprotein complex responsible for the synthesis of proteins in the cell. The small ribosomal subunit (SSU) binds messenger RNAs (mRNAs) and translates the encoded message by selecting cognate aminoacyl-transfer RNA (tRNA) molecules. The large subunit (LSU) contains the ribosomal catalytic site termed the peptidyl transferase center (PTC), which catalyzes the formation of peptide bonds, thereby polymerizing the amino acids delivered by tRNAs into a polypeptide chain. The nascent polypeptides leave the ribosome through a tunnel in the LSU and interact with protein factors that function in enzymatic processing, targeting, and the membrane insertion of nascent chains at the exit of the ribosomal tunnel. The sequence is that of Small ribosomal subunit protein eS12B (rps1202) from Schizosaccharomyces pombe (strain 972 / ATCC 24843) (Fission yeast).